The primary structure comprises 569 residues: 3-(3-hydroxy-phenyl)propionate/3-hydroxycinnamic acid hydroxylase (569 aa).

FAD-binding positions include D8–E37 and F273–D283.

This sequence belongs to the PheA/TfdB FAD monooxygenase family. FAD is required as a cofactor.

The enzyme catalyses 3-(3-hydroxyphenyl)propanoate + NADH + O2 + H(+) = 3-(2,3-dihydroxyphenyl)propanoate + NAD(+) + H2O. The catalysed reaction is (2E)-3-(3-hydroxyphenyl)prop-2-enoate + NADH + O2 + H(+) = (2E)-3-(2,3-dihydroxyphenyl)prop-2-enoate + NAD(+) + H2O. It participates in aromatic compound metabolism; 3-phenylpropanoate degradation. Catalyzes the insertion of one atom of molecular oxygen into position 2 of the phenyl ring of 3-(3-hydroxyphenyl)propionate (3-HPP) and hydroxycinnamic acid (3HCI). This is 3-(3-hydroxy-phenyl)propionate/3-hydroxycinnamic acid hydroxylase from Mycolicibacterium gilvum (strain PYR-GCK) (Mycobacterium gilvum (strain PYR-GCK)).